The sequence spans 626 residues: Protein ALEX (626 aa).

Disordered stretches follow at residues 1–29, 173–223, 236–473, and 556–612; these read MMAR…LEPM, TTAH…AAHP, AAPG…APRS, and AASV…NNSR. Polar residues-rich tracts occupy residues 186–195 and 255–270; these read KSTAAASSRQ and GSTT…QSRL. The span at 281–312 shows a compositional bias: basic and acidic residues; it reads QIRESEQRDPQLRRKQQRWKEPLMPRREEKYP. Over residues 337–346 the composition is skewed to low complexity; it reads QPILTPGQPQ. Positions 366–399 are enriched in pro residues; that stretch reads IPTPGQPLPPQPIPTPGRPLTPQPIPTPGRPLTP. The span at 416-435 shows a compositional bias: low complexity; sequence RLLRPGQPMSPQLRQTQGLP. Residues 436-445 are compositionally biased toward pro residues; the sequence is LPQPLLPPGQ. Residues 570 to 579 show a composition bias toward basic residues; that stretch reads ALSRSRRYPW. The span at 600–611 shows a compositional bias: polar residues; sequence RRNAVSSSTNNS.

It belongs to the ALEX family. In terms of assembly, interacts with the N-terminal region of the XLas isoforms of guanine nucleotide-binding protein G(s) subunit alpha.

It localises to the cell membrane. The protein localises to the cell projection. Its subcellular location is the ruffle. In terms of biological role, may inhibit the adenylyl cyclase-stimulating activity of guanine nucleotide-binding protein G(s) subunit alpha which is produced from the same locus in a different open reading frame. In Homo sapiens (Human), this protein is Protein ALEX.